The sequence spans 602 residues: Glutaminase liver isoform, mitochondrial (602 aa).

A mitochondrion-targeting transit peptide spans 1–14; sequence MRSMRALQNALSRA. 2 disordered regions span residues 1-29 and 45-66; these read MRSM…PSRG and AQGR…ASHS. Serine 219 contributes to the substrate binding site. Lysine 253 carries the N6-succinyllysine modification. Asparagine 268 is a substrate binding site. 2 positions are modified to N6-acetyllysine: lysine 279 and lysine 284. 2 residues coordinate substrate: glutamate 314 and asparagine 321. Lysine 329 is modified (N6-acetyllysine). Residues tyrosine 347, tyrosine 399, and valine 417 each contribute to the substrate site. ANK repeat units lie at residues 518 to 551 and 552 to 585; these read DSRT…VKDR and WGNI…SETQ.

Belongs to the glutaminase family. Homotetramer, dimer of dimers. Does not assemble into higher oligomers. Interacts with the PDZ domain of the syntrophin SNTA1. Interacts with the PDZ domain of TAX1BP3.

Its subcellular location is the mitochondrion. The enzyme catalyses L-glutamine + H2O = L-glutamate + NH4(+). Its activity is regulated as follows. Enzyme activity is not stimulated by phosphate. Phosphate increases kcat, but decreases substrate affinity, resulting in unchanged enzyme activity. Its function is as follows. Plays an important role in the regulation of glutamine catabolism. Promotes mitochondrial respiration and increases ATP generation in cells by catalyzing the synthesis of glutamate and alpha-ketoglutarate. Increases cellular anti-oxidant function via NADH and glutathione production. May play a role in preventing tumor proliferation. In Mus musculus (Mouse), this protein is Glutaminase liver isoform, mitochondrial (Gls2).